A 390-amino-acid chain; its full sequence is Fluoride export protein 1 (390 aa).

The interval 1-22 (MVAPLVSESQSSSIEETDEQQQ) is disordered. Topologically, residues 1 to 72 (MVAPLVSESQ…RFLDKTQKYY (72 aa)) are cytoplasmic. A helical membrane pass occupies residues 73–93 (PVILNIVHGAIWGVLVRKGLM). The Extracellular segment spans residues 94–100 (SLTTYSG). The chain crosses the membrane as a helical span at residues 101–121 (SFLSGVIWANFAACVVMGLAI). The Cytoplasmic portion of the chain corresponds to 122-143 (DGEVFWIRLLEEKDYPNKGAIP). Residues 144-164 (VYTGLTTGFCGTVSSFSSVIL) traverse the membrane as a helical segment. The Extracellular portion of the chain corresponds to 165 to 185 (EAFNKAADTDIGVRHHYPNGA). Residues 186–206 (YGIMQFLAVILAQFGLSIMGF) traverse the membrane as a helical segment. Residues 207–229 (HMGKQFSAVVDNYLPLVTKRIYK) are Cytoplasmic-facing. Residues 230 to 250 (VLELTSMILGVVLVVITCILI) form a helical membrane-spanning segment. Topologically, residues 251–256 (GVKKQG) are extracellular. Residues 257–279 (SWRSWTFSMLFAPFGALLRYYLS) traverse the membrane as a helical segment. Topologically, residues 280-290 (KFLNNKVSNFP) are cytoplasmic. Residues 291–311 (LGTFTANFLGTLLLAVFTLLA) form a helical membrane-spanning segment. At 312–338 (RGKLPGGKGHIVTNTIALHVLEGLDDG) the chain is on the extracellular side. A helical membrane pass occupies residues 339 to 359 (FCGGLTTVSTFVVELFGLKTL). Topologically, residues 360–368 (FSYRYGTIS) are cytoplasmic. A helical membrane pass occupies residues 369–389 (ILVCFAGVVLILGSYNWSVGL). Residue aspartate 390 is a topological domain, extracellular.

It belongs to the fluoride channel Fluc/FEX (TC 1.A.43) family.

Its subcellular location is the cell membrane. It carries out the reaction fluoride(in) = fluoride(out). Its function is as follows. Fluoride channel required for the rapid expulsion of cytoplasmic fluoride. The chain is Fluoride export protein 1 from Candida albicans (strain SC5314 / ATCC MYA-2876) (Yeast).